Here is a 122-residue protein sequence, read N- to C-terminus: RxLR effector protein Avh52 (122 aa).

The signal sequence occupies residues 1–21; that stretch reads MRLTSILVLVIAATFHTTGTA. Residues 50–68 carry the RxLR-dEER motif; the sequence is RLLRRVEKDKVDYEQDEQR. Residues 69–86 are TAP1-binding; it reads SFGALKDAVKKLNPVTAV. The tract at residues 87 to 98 is nuclear localization signal (NLS); that stretch reads KKFFKQRAKRKK.

The protein belongs to the RxLR effector family. In terms of assembly, interacts with host acetyl transferase TAP1.

It localises to the secreted. The protein resides in the host nucleus. In terms of biological role, effector that suppresses plant defense responses during the early stages of pathogen infection. Suppresses cell death induced by effectors and PAMPs in plant hosts. Interacts with host acetyltransferase TAP1 and causes TAP1 relocation into the nucleus where it acetylates histones H2A and H3 during early infection, thereby promoting susceptibility of host plant to P.sojae. The sequence is that of RxLR effector protein Avh52 from Phytophthora sojae (strain P6497) (Soybean stem and root rot agent).